A 170-amino-acid chain; its full sequence is Large ribosomal subunit protein uL11 (170 aa).

Belongs to the universal ribosomal protein uL11 family. As to quaternary structure, part of the ribosomal stalk of the 50S ribosomal subunit. Interacts with L10 and the large rRNA to form the base of the stalk. L10 forms an elongated spine to which L12 dimers bind in a sequential fashion forming a multimeric L10(L12)X complex.

Its function is as follows. Forms part of the ribosomal stalk which helps the ribosome interact with GTP-bound translation factors. The sequence is that of Large ribosomal subunit protein uL11 from Saccharolobus islandicus (strain M.14.25 / Kamchatka #1) (Sulfolobus islandicus).